Consider the following 559-residue polypeptide: Probable D-2-hydroxyglutarate dehydrogenase, mitochondrial (559 aa).

The transit peptide at 1–80 (MARRAAAGLL…MNFEVQKRSF (80 aa)) directs the protein to the mitochondrion. The FAD-binding PCMH-type domain occupies 131–310 (YKGSSQLLLL…TKIAILTPAK (180 aa)).

The protein belongs to the FAD-binding oxidoreductase/transferase type 4 family. As to quaternary structure, homodimer. The cofactor is FAD.

It localises to the mitochondrion. The catalysed reaction is (R)-2-hydroxyglutarate + A = 2-oxoglutarate + AH2. In terms of biological role, catalyzes the oxidation of D-2-hydroxyglutarate to alpha-ketoglutarate. This is Probable D-2-hydroxyglutarate dehydrogenase, mitochondrial (D2HGDH) from Oryza sativa subsp. japonica (Rice).